The primary structure comprises 258 residues: Hydroxyacylglutathione hydrolase (258 aa).

Zn(2+)-binding residues include histidine 52, histidine 54, aspartate 56, histidine 57, histidine 109, aspartate 126, and histidine 164.

It belongs to the metallo-beta-lactamase superfamily. Glyoxalase II family. Monomer. The cofactor is Zn(2+).

The enzyme catalyses an S-(2-hydroxyacyl)glutathione + H2O = a 2-hydroxy carboxylate + glutathione + H(+). The protein operates within secondary metabolite metabolism; methylglyoxal degradation; (R)-lactate from methylglyoxal: step 2/2. In terms of biological role, thiolesterase that catalyzes the hydrolysis of S-D-lactoyl-glutathione to form glutathione and D-lactic acid. The polypeptide is Hydroxyacylglutathione hydrolase (Xylella fastidiosa (strain 9a5c)).